The sequence spans 150 residues: T-complex protein 1 subunit beta (150 aa).

Asp-35 contacts Mg(2+). ADP contacts are provided by Gly-36, Thr-37, Thr-38, and Ser-39. The ATP site is built by Gly-36, Thr-37, and Thr-38.

It belongs to the TCP-1 chaperonin family. In terms of assembly, component of the chaperonin-containing T-complex (TRiC), a hexadecamer composed of two identical back-to-back stacked rings enclosing a protein folding chamber. Each ring is made up of eight different subunits: TCP1/CCT1, CCT2, CCT3, CCT4, CCT5, CCT6A/CCT6, CCT7, CCT8. Interacts with PACRG. Interacts with FLCN. Interacts with DLEC1. Interacts with SVEP1.

It is found in the cytoplasm. It catalyses the reaction ATP + H2O = ADP + phosphate + H(+). Its function is as follows. Component of the chaperonin-containing T-complex (TRiC), a molecular chaperone complex that assists the folding of actin, tubulin and other proteins upon ATP hydrolysis. The TRiC complex mediates the folding of WRAP53/TCAB1, thereby regulating telomere maintenance. As part of the TRiC complex may play a role in the assembly of BBSome, a complex involved in ciliogenesis regulating transports vesicles to the cilia. The sequence is that of T-complex protein 1 subunit beta from Mesocricetus auratus (Golden hamster).